Here is a 389-residue protein sequence, read N- to C-terminus: Phospho-N-acetylmuramoyl-pentapeptide-transferase (389 aa).

11 helical membrane-spanning segments follow: residues 21-41, 71-91, 97-117, 134-154, 167-187, 190-210, 222-242, 259-279, 286-306, 311-331, and 366-386; these read YITMRAVLACATALLIGLVAG, TPTMGGALILIAVAISTLLWA, FVWVVLLVTFGFGWIGWMDDY, FFWQATIGLVAAVYLAFAVSA, WVSSGFAMPLPTRADLIVPFF, VSYPLGVLGFVALTWAVIVGT, GLAIMPTVMVGSALGIFAYVV, AAELMVLCAAIAGAGLAFLWF, VFMGDVGALALGGALGTIAVI, IVLFIMGGVFVVETLSVMMQV, and QVVVRFWIISMMLVLIGLSTL.

The protein belongs to the glycosyltransferase 4 family. MraY subfamily. It depends on Mg(2+) as a cofactor.

The protein localises to the cell inner membrane. The catalysed reaction is UDP-N-acetyl-alpha-D-muramoyl-L-alanyl-gamma-D-glutamyl-meso-2,6-diaminopimeloyl-D-alanyl-D-alanine + di-trans,octa-cis-undecaprenyl phosphate = di-trans,octa-cis-undecaprenyl diphospho-N-acetyl-alpha-D-muramoyl-L-alanyl-D-glutamyl-meso-2,6-diaminopimeloyl-D-alanyl-D-alanine + UMP. The protein operates within cell wall biogenesis; peptidoglycan biosynthesis. In terms of biological role, catalyzes the initial step of the lipid cycle reactions in the biosynthesis of the cell wall peptidoglycan: transfers peptidoglycan precursor phospho-MurNAc-pentapeptide from UDP-MurNAc-pentapeptide onto the lipid carrier undecaprenyl phosphate, yielding undecaprenyl-pyrophosphoryl-MurNAc-pentapeptide, known as lipid I. In Bordetella petrii (strain ATCC BAA-461 / DSM 12804 / CCUG 43448), this protein is Phospho-N-acetylmuramoyl-pentapeptide-transferase.